The following is a 159-amino-acid chain: Transcription elongation factor GreA (159 aa).

Residues 43-76 (LSENAEYDAAREEQSQLEAKIGDLENKLASATIL) adopt a coiled-coil conformation.

It belongs to the GreA/GreB family.

Functionally, necessary for efficient RNA polymerase transcription elongation past template-encoded arresting sites. The arresting sites in DNA have the property of trapping a certain fraction of elongating RNA polymerases that pass through, resulting in locked ternary complexes. Cleavage of the nascent transcript by cleavage factors such as GreA or GreB allows the resumption of elongation from the new 3'terminus. GreA releases sequences of 2 to 3 nucleotides. The chain is Transcription elongation factor GreA from Chlorobaculum parvum (strain DSM 263 / NCIMB 8327) (Chlorobium vibrioforme subsp. thiosulfatophilum).